Consider the following 148-residue polypeptide: Large ribosomal subunit protein bL9 (148 aa).

Belongs to the bacterial ribosomal protein bL9 family.

Functionally, binds to the 23S rRNA. This is Large ribosomal subunit protein bL9 from Listeria welshimeri serovar 6b (strain ATCC 35897 / DSM 20650 / CCUG 15529 / CIP 8149 / NCTC 11857 / SLCC 5334 / V8).